We begin with the raw amino-acid sequence, 327 residues long: Probable cell division protein WhiA (327 aa).

The segment at residues 275–308 (SLEELGRLADPQMTKDAVAGRIRRLLTTADKRAR) is a DNA-binding region (H-T-H motif).

The protein belongs to the WhiA family.

In terms of biological role, involved in cell division and chromosome segregation. This Corynebacterium efficiens (strain DSM 44549 / YS-314 / AJ 12310 / JCM 11189 / NBRC 100395) protein is Probable cell division protein WhiA.